Here is a 292-residue protein sequence, read N- to C-terminus: NAD(P)H-hydrate epimerase (292 aa).

Residues 1-52 (MYGLRTLFSLGLLVGGARLGARVAQVGALGGTCPLGQGLVADGNSQCKQFRT) constitute a mitochondrion transit peptide. A YjeF N-terminal domain is found at 68 to 279 (AQAVDEELFN…ALEKKYSLNL (212 aa)). 122-126 (NNGGD) serves as a coordination point for (6S)-NADPHX. Asn123 and Asp189 together coordinate K(+). Residues 193–199 (GFSFKGA) and Asp222 each bind (6S)-NADPHX. Ser225 contacts K(+).

Belongs to the NnrE/AIBP family. Requires K(+) as cofactor.

The protein resides in the mitochondrion. The protein localises to the secreted. It catalyses the reaction (6R)-NADHX = (6S)-NADHX. The enzyme catalyses (6R)-NADPHX = (6S)-NADPHX. Its function is as follows. Catalyzes the epimerization of the S- and R-forms of NAD(P)HX, a damaged form of NAD(P)H that is a result of enzymatic or heat-dependent hydration. This is a prerequisite for the S-specific NAD(P)H-hydrate dehydratase to allow the repair of both epimers of NAD(P)HX. The protein is NAD(P)H-hydrate epimerase of Xenopus tropicalis (Western clawed frog).